Consider the following 590-residue polypeptide: Protein Spindly (590 aa).

The stretch at 1 to 401 (MSDLEDEIKV…SMARMKALSE (401 aa)) forms a coiled coil. Positions 446–590 (NKAQVQKRRR…KTMANECAQQ (145 aa)) are disordered. Composition is skewed to basic and acidic residues over residues 483 to 497 (SNEK…HPVE) and 518 to 527 (RESKSVRICE). 2 stretches are compositionally biased toward polar residues: residues 541–554 (VNDS…QTHQ) and 572–590 (QQPT…CAQQ).

The protein belongs to the Spindly family.

It localises to the chromosome. The protein localises to the centromere. It is found in the kinetochore. Its function is as follows. Required for the localization of dynein and dynactin to the mitotic kintochore. Dynein is believed to control the initial lateral interaction between the kinetochore and spindle microtubules and to facilitate the subsequent formation of end-on kinetochore-microtubule attachments mediated by the NDC80 complex. May act as an adapter protein linking the dynein motor complex to various cargos. The polypeptide is Protein Spindly (spdl1) (Danio rerio (Zebrafish)).